A 473-amino-acid polypeptide reads, in one-letter code: O-methyltransferase ARMGADRAFT_1088206 (473 aa).

S-adenosyl-L-methionine is bound by residues 276–277, D299, 330–331, and R348; these read AG and DM. H352 functions as the Proton acceptor in the catalytic mechanism.

The protein belongs to the class I-like SAM-binding methyltransferase superfamily. Cation-independent O-methyltransferase family.

It functions in the pathway secondary metabolite biosynthesis. Functionally, O-methyltransferase, part of the gene cluster that mediates the biosynthesis of melleolides, a range of antifungal and phytotoxic polyketide derivatives composed of an orsellinic acid (OA) moiety esterified to various sesquiterpene alcohols. The first step in melleolides biosynthesis is performed by the delta(6)-protoilludene synthase PRO1 which catalyzes the cyclization of farnesyl diphosphate to protoilludene. The orsellinic acid synthase armB produces OA by condensing acetyl-CoA with 3 malonyl-CoA units in a three-round chain elongation reaction folowed by a C2-C7 ring closure. ArmB further catalyzes the trans-esterification of OA to the various sesquiterpene alcohols resulting from the hydroxylation of protoilludene. The melleolides cluster also includes 5 cytochrome P450 monooxygenases, 4 NAD(+)-dependent oxidoreductases, one flavin-dependent oxidoreductase, and one O-methyltransferase. The cytochrome P450 monooxygenases may be involved in protoilludene hydroxylation to elaborate melleolides with multiple alcohol groups, such as melleolide D, which carries alcohol functionalities at C-4, C-5, C-10, and C-13. The role of the NAD(+)-dependent enzymes remains unknown. Numerous melleolides, including arnamial, show 5'-O-methylation of the aromatic moiety which may be catalyzed by the methyltransferase encoded in the cluster. The flavin-dependent oxidoreductase might represent the dehydrogenase yielding the aldehyde in position 1 of arnamial and other melleolides. Finally, several halogenase localized outside of the cluster, are able to catalyze the transfer of a single chlorine atom to the melleolide backbone, resulting in a 6'-chloromelleolide product. The protein is O-methyltransferase ARMGADRAFT_1088206 of Armillaria gallica (Bulbous honey fungus).